The following is a 174-amino-acid chain: Peptide deformylase (174 aa).

Cys96 and His138 together coordinate Fe cation. The active site involves Glu139. Residue His142 participates in Fe cation binding.

The protein belongs to the polypeptide deformylase family. Fe(2+) is required as a cofactor.

It catalyses the reaction N-terminal N-formyl-L-methionyl-[peptide] + H2O = N-terminal L-methionyl-[peptide] + formate. Removes the formyl group from the N-terminal Met of newly synthesized proteins. Requires at least a dipeptide for an efficient rate of reaction. N-terminal L-methionine is a prerequisite for activity but the enzyme has broad specificity at other positions. This Nautilia profundicola (strain ATCC BAA-1463 / DSM 18972 / AmH) protein is Peptide deformylase.